A 236-amino-acid chain; its full sequence is MTADSTEIPQLALPLSQSPAAGKRARRILCGVDEAGRGPLAGPVTAAAVVLNPRKPIQGLADSKVLTAKKREALYDEIVEKALAWHVAEATVEEIDRINILHATMLAMQRAVQGVAAQGVLPDLVQVDGNRCPQVAFAVEAIVKGDALVPAISAASILAKVTRDRQLAALHIAFPQYGFDVHAGYGTPQHLAAIERHGVTPHHRRSFAPVRRALDGAPPPAGDAVPQTDAKTAWAD.

One can recognise an RNase H type-2 domain in the interval 27–219; it reads RILCGVDEAG…VRRALDGAPP (193 aa). The a divalent metal cation site is built by D33, E34, and D128. Residues 212–236 form a disordered region; sequence RALDGAPPPAGDAVPQTDAKTAWAD.

Belongs to the RNase HII family. Mn(2+) serves as cofactor. Requires Mg(2+) as cofactor.

It is found in the cytoplasm. It carries out the reaction Endonucleolytic cleavage to 5'-phosphomonoester.. In terms of biological role, endonuclease that specifically degrades the RNA of RNA-DNA hybrids. The sequence is that of Ribonuclease HII from Ralstonia nicotianae (strain ATCC BAA-1114 / GMI1000) (Ralstonia solanacearum).